A 979-amino-acid polypeptide reads, in one-letter code: Translation initiation factor IF-2 (979 aa).

The tract at residues Val33–Glu391 is disordered. Composition is skewed to low complexity over residues Gln54–Gln63 and Ala139–Ala150. Over residues Pro151–Thr166 the composition is skewed to pro residues. Acidic residues predominate over residues Pro234–Thr252. Composition is skewed to basic residues over residues Pro263 to Arg278 and Thr294 to Pro303. Residues Gly314 to Leu328 are compositionally biased toward polar residues. Basic and acidic residues predominate over residues Lys371–Val380. The region spanning His468–Ser641 is the tr-type G domain. Residues Gly477–Thr484 form a G1 region. Position 477–484 (Gly477–Thr484) interacts with GTP. The interval Gly502–His506 is G2. Residues Asp527 to Gly530 are G3. Residues Asp527–His531 and Asn581–Asp584 each bind GTP. The G4 stretch occupies residues Asn581 to Asp584. Residues Ser617 to Leu619 are G5.

It belongs to the TRAFAC class translation factor GTPase superfamily. Classic translation factor GTPase family. IF-2 subfamily.

It is found in the cytoplasm. One of the essential components for the initiation of protein synthesis. Protects formylmethionyl-tRNA from spontaneous hydrolysis and promotes its binding to the 30S ribosomal subunits. Also involved in the hydrolysis of GTP during the formation of the 70S ribosomal complex. This Picosynechococcus sp. (strain ATCC 27264 / PCC 7002 / PR-6) (Agmenellum quadruplicatum) protein is Translation initiation factor IF-2.